We begin with the raw amino-acid sequence, 517 residues long: Tyrosine-protein kinase Fgr (517 aa).

Gly2 carries the N-myristoyl glycine lipid modification. 2 S-palmitoyl cysteine lipidation sites follow: Cys3 and Cys6. A compositionally biased stretch (basic and acidic residues) spans 17 to 33 (VGLEGDFRSQGAEERYY). A disordered region spans residues 17 to 46 (VGLEGDFRSQGAEERYYPDPTQGRSSSISP). Phosphotyrosine is present on Tyr32. Ser50 is subject to Phosphoserine. Residues 65–126 (TGVTIFVALY…PSNYVAPVDS (62 aa)) enclose the SH3 domain. One can recognise an SH2 domain in the interval 132-229 (WYFGKISRKD…GLCYLLTAPC (98 aa)). Position 196 is a phosphotyrosine (Tyr196). Ser206 is subject to Phosphoserine. Residues 251-504 (IALDRRLGTG…YLQSFLEDYF (254 aa)) enclose the Protein kinase domain. ATP-binding positions include 257 to 265 (LGTGCFGDV) and Lys279. The active-site Proton acceptor is the Asp370. Tyr400 bears the Phosphotyrosine; by autocatalysis mark. Phosphotyrosine; by SRC is present on Tyr511.

This sequence belongs to the protein kinase superfamily. Tyr protein kinase family. SRC subfamily. In terms of assembly, interacts with ITGB1, ITGB2, MS4A2/FCER1B and FCGR2. Interacts (via SH2 domain) with SYK (tyrosine phosphorylated). Interacts (via SH2 domain) with FLT3 (tyrosine phosphorylated). Interacts with PTK2/FAK1. Interacts (via SH2 domain) with HCLS1 (tyrosine phosphorylated by SYK). Interacts with SIRPA and PTPNS1. Interacts (not phosphorylated on tyrosine residues) with CBL; FGR tyrosine phosphorylation promotes dissociation. Interacts with CLNK. Ubiquitinated. Becomes ubiquitinated in response to ITGB2 signaling; this does not lead to degradation. In terms of processing, phosphorylated. Autophosphorylated on tyrosine residues. Becomes phosphorylated in response to FCGR2 engagement, cell adhesion and signaling by ITGB2. Prior phosphorylation at Tyr-511 by SRC inhibits ulterior autophosphorylation at Tyr-400. As to expression, detected in brain cortex (at protein level).

The protein resides in the cell membrane. The protein localises to the cell projection. It is found in the ruffle membrane. It localises to the cytoplasm. Its subcellular location is the cytosol. The protein resides in the cytoskeleton. The protein localises to the mitochondrion inner membrane. It is found in the mitochondrion intermembrane space. The enzyme catalyses L-tyrosyl-[protein] + ATP = O-phospho-L-tyrosyl-[protein] + ADP + H(+). Its activity is regulated as follows. Activated by autophosphorylation. Prior phosphorylation at Tyr-511 by SRC inhibits ulterior autophosphorylation at Tyr-400. Activated by phorbol myristate acetate, phosphatidic acid and poly-Lys. Binding (via SH2 domain) of HCLS1 that is already phosphorylated by SYK strongly increases kinase activity. Non-receptor tyrosine-protein kinase that transmits signals from cell surface receptors devoid of kinase activity and contributes to the regulation of immune responses, including neutrophil, monocyte, macrophage and mast cell functions, cytoskeleton remodeling in response to extracellular stimuli, phagocytosis, cell adhesion and migration. Promotes mast cell degranulation, release of inflammatory cytokines and IgE-mediated anaphylaxis. Acts downstream of receptors that bind the Fc region of immunoglobulins, such as MS4A2/FCER1B, FCER1G and FCGR2. Acts downstream of ITGB1 and ITGB2, and regulates actin cytoskeleton reorganization, cell spreading and adhesion. Depending on the context, activates or inhibits cellular responses. Functions as a negative regulator of ITGB2 signaling, phagocytosis and SYK activity in monocytes. Required for normal ITGB1 and ITGB2 signaling, normal cell spreading and adhesion in neutrophils and macrophages. Functions as a positive regulator of cell migration and regulates cytoskeleton reorganization via RAC1 activation. Phosphorylates SYK (in vitro) and promotes SYK-dependent activation of AKT1 and MAP kinase signaling. Phosphorylates PLD2 in antigen-stimulated mast cells, leading to PLD2 activation and the production of the signaling molecules lysophosphatidic acid and diacylglycerol. Promotes activation of PIK3R1. Phosphorylates FASLG, and thereby regulates its ubiquitination and subsequent internalization. Phosphorylates ABL1. Promotes phosphorylation of CBL, CTTN, PIK3R1, PTK2/FAK1, PTK2B/PYK2 and VAV2. Phosphorylates HCLS1 that has already been phosphorylated by SYK, but not unphosphorylated HCLS1. Together with CLNK, it acts as a negative regulator of natural killer cell-activating receptors and inhibits interferon-gamma production. This Rattus norvegicus (Rat) protein is Tyrosine-protein kinase Fgr (Fgr).